We begin with the raw amino-acid sequence, 378 residues long: TelA-like protein SAV1406 (378 aa).

It belongs to the TelA family.

The protein is TelA-like protein SAV1406 of Staphylococcus aureus (strain Mu50 / ATCC 700699).